A 279-amino-acid polypeptide reads, in one-letter code: Protein SCO2 homolog, mitochondrial (279 aa).

A helical membrane pass occupies residues 73-90 (LVVTLLFGGGIIGTWWYV). Over 91-279 (HQEKEKRIQM…MKTFVRLFPD (189 aa)) the chain is Mitochondrial intermembrane. One can recognise a Thioredoxin domain in the interval 97 to 271 (RIQMQRLEQL…IAESIRNHMK (175 aa)). Residues cysteine 145, cysteine 149, and histidine 236 each coordinate Cu cation. A disulfide bridge connects residues cysteine 145 and cysteine 149.

It belongs to the SCO1/2 family. Homodimer.

The protein localises to the mitochondrion inner membrane. In terms of biological role, copper metallochaperone essential for the synthesis and maturation of cytochrome c oxidase subunit II (MT-CO2/COX2) by facilitating the incorporation of copper into the Cu(A) site of MT-CO2/COX2. Could also act as a thiol-disulfide oxidoreductase to regulate the redox state of the cysteines in SCO1 during maturation of MT-CO2/COX2. The polypeptide is Protein SCO2 homolog, mitochondrial (sco2) (Danio rerio (Zebrafish)).